Here is a 473-residue protein sequence, read N- to C-terminus: Glutamyl-tRNA reductase (473 aa).

Substrate contacts are provided by residues 49–52 (TCNR), Ser109, 114–116 (EQQ), and Gln120. The active-site Nucleophile is Cys50. 189–194 (GAGSMG) lines the NADP(+) pocket. A disordered region spans residues 445–473 (SGLDAGSGPQGADGPSAGPTPSAPNPSAE).

This sequence belongs to the glutamyl-tRNA reductase family. As to quaternary structure, homodimer.

The enzyme catalyses (S)-4-amino-5-oxopentanoate + tRNA(Glu) + NADP(+) = L-glutamyl-tRNA(Glu) + NADPH + H(+). Its pathway is porphyrin-containing compound metabolism; protoporphyrin-IX biosynthesis; 5-aminolevulinate from L-glutamyl-tRNA(Glu): step 1/2. Functionally, catalyzes the NADPH-dependent reduction of glutamyl-tRNA(Glu) to glutamate 1-semialdehyde (GSA). The chain is Glutamyl-tRNA reductase from Mycobacterium ulcerans (strain Agy99).